A 2242-amino-acid chain; its full sequence is Large tegument protein deneddylase (2242 aa).

The interval 1–238 (MKVTQASCHQ…IDLTGVVRES (238 aa)) is deubiquitination activity. The 223-residue stretch at 4–226 (TQASCHQGDI…AARLVSTYRD (223 aa)) folds into the Peptidase C76 domain. Catalysis depends on residues cysteine 24, aspartate 160, and histidine 162. The interval 239-318 (ADTAATTTTA…KTLATASSSS (80 aa)) is disordered. Positions 240-250 (DTAATTTTAAP) are enriched in low complexity. The segment covering 251-268 (SLPPLPDPIVDPGCPPGV) has biased composition (pro residues). Positions 304-318 (PSTTSKTLATASSSS) are enriched in low complexity. The tract at residues 328–332 (SSAVP) is interaction with inner tegument protein. The segment covering 1173–1190 (SQQKMEGQLQETRQQMTE) has biased composition (polar residues). Residues 1173-1229 (SQQKMEGQLQETRQQMTETSERLDRSLRQDPGSSSVTRVPEKPFKGQELAGRITPPP) are disordered. A compositionally biased stretch (basic and acidic residues) spans 1191 to 1200 (TSERLDRSLR).

Belongs to the herpesviridae large tegument protein family. As to quaternary structure, interacts with host CUL1 and CUL4A; these interactions inhibit the E3 ligase activity of cullins. Interacts with inner tegument protein. Interacts with capsid vertex specific component CVC2. Interacts with the major capsid protein/MCP.

Its subcellular location is the virion tegument. The protein resides in the host cytoplasm. The protein localises to the host nucleus. It catalyses the reaction Thiol-dependent hydrolysis of ester, thioester, amide, peptide and isopeptide bonds formed by the C-terminal Gly of ubiquitin (a 76-residue protein attached to proteins as an intracellular targeting signal).. Its function is as follows. Large tegument protein that plays multiple roles in the viral cycle. During viral entry, remains associated with the capsid while most of the tegument is detached and participates in the capsid transport toward the host nucleus. Plays a role in the routing of the capsid at the nuclear pore complex and subsequent uncoating. Within the host nucleus, acts as a deneddylase and promotes the degradation of nuclear CRLs (cullin-RING ubiquitin ligases) and thereby stabilizes nuclear CRL substrates, while cytoplasmic CRLs remain unaffected. These modifications prevent host cell cycle S-phase progression and create a favorable environment allowing efficient viral genome replication. Participates later in the secondary envelopment of capsids. Indeed, plays a linker role for the association of the outer viral tegument to the capsids together with the inner tegument protein. This chain is Large tegument protein deneddylase, found in Homo sapiens (Human).